The following is a 95-amino-acid chain: Large ribosomal subunit protein bL31 (95 aa).

Positions 68-95 (AGLNNINKKPEKKKIQGKSEPRKSLNEL) are disordered. A compositionally biased stretch (basic and acidic residues) spans 80–95 (KKIQGKSEPRKSLNEL).

Belongs to the bacterial ribosomal protein bL31 family. Type A subfamily. In terms of assembly, part of the 50S ribosomal subunit.

Binds the 23S rRNA. The sequence is that of Large ribosomal subunit protein bL31 from Ureaplasma parvum serovar 3 (strain ATCC 700970).